The chain runs to 56 residues: Alpha-conotoxin TxIA (56 aa).

The N-terminal stretch at 1-16 (MFTVFLLVVLATAVVS) is a signal peptide. Residues 17-39 (FTSDRASDDGKAAASDLITLTIK) constitute a propeptide that is removed on maturation. 2 cysteine pairs are disulfide-bonded: C41-C47 and C42-C55. A ser-Xaa-Pro motif, crucial for potent interaction with nAChR region spans residues 43–45 (SRP). P45 and P46 each carry 4-hydroxyproline; partial. At C55 the chain carries Cysteine amide.

Belongs to the conotoxin A superfamily. In terms of processing, exists in 4 different forms, depending on hydroxylations. Tx1a-PP does not contain hydroxyproline, tx1a-OP has one hydroxyproline at position 45, tx1a-PO has one hydroxyproline at position 46, and tx1a-PP has two hydroxyprolines at positions 45 and 46. Expressed by the venom duct. Tx1a that containing 1 or 2 non-hydroxylated prolines are mostly present in part 5 of the venom duct (distal part near the pharynx), whereas tx1a-OO (with 2 hydroxyprolines) is mostly present in part 4 of the venom duct (follewed by part 3).

The protein resides in the secreted. In terms of biological role, alpha-conotoxins act on postsynaptic membranes, they bind to the nicotinic acetylcholine receptors (nAChR) and thus inhibit them. This toxin inhibits rat alpha-3-beta-2/CHRNA3-CHRNB2 (IC(50)=3.5 nM), rat alpha-7/CHRNA7 (IC(50)=392 nM) nAChR, and the L.stagnalis soluble acetylcholine receptor (all tested without hydroxyproline). In Conus textile (Cloth-of-gold cone), this protein is Alpha-conotoxin TxIA.